A 308-amino-acid polypeptide reads, in one-letter code: Ribosomal RNA large subunit methyltransferase F (308 aa).

This sequence belongs to the methyltransferase superfamily. METTL16/RlmF family.

It localises to the cytoplasm. The catalysed reaction is adenosine(1618) in 23S rRNA + S-adenosyl-L-methionine = N(6)-methyladenosine(1618) in 23S rRNA + S-adenosyl-L-homocysteine + H(+). Specifically methylates the adenine in position 1618 of 23S rRNA. The protein is Ribosomal RNA large subunit methyltransferase F of Salmonella paratyphi A (strain ATCC 9150 / SARB42).